The sequence spans 377 residues: Succinyl-diaminopimelate desuccinylase (377 aa).

His68 lines the Zn(2+) pocket. The active site involves Asp70. Residue Asp101 coordinates Zn(2+). Glu135 (proton acceptor) is an active-site residue. Residues Glu136, Glu164, and His350 each contribute to the Zn(2+) site.

Belongs to the peptidase M20A family. DapE subfamily. Homodimer. The cofactor is Zn(2+). It depends on Co(2+) as a cofactor.

The enzyme catalyses N-succinyl-(2S,6S)-2,6-diaminopimelate + H2O = (2S,6S)-2,6-diaminopimelate + succinate. It functions in the pathway amino-acid biosynthesis; L-lysine biosynthesis via DAP pathway; LL-2,6-diaminopimelate from (S)-tetrahydrodipicolinate (succinylase route): step 3/3. In terms of biological role, catalyzes the hydrolysis of N-succinyl-L,L-diaminopimelic acid (SDAP), forming succinate and LL-2,6-diaminopimelate (DAP), an intermediate involved in the bacterial biosynthesis of lysine and meso-diaminopimelic acid, an essential component of bacterial cell walls. The protein is Succinyl-diaminopimelate desuccinylase of Psychromonas ingrahamii (strain DSM 17664 / CCUG 51855 / 37).